An 89-amino-acid polypeptide reads, in one-letter code: Small ribosomal subunit protein uS15 (89 aa).

The protein belongs to the universal ribosomal protein uS15 family. Part of the 30S ribosomal subunit. Forms a bridge to the 50S subunit in the 70S ribosome, contacting the 23S rRNA.

One of the primary rRNA binding proteins, it binds directly to 16S rRNA where it helps nucleate assembly of the platform of the 30S subunit by binding and bridging several RNA helices of the 16S rRNA. Functionally, forms an intersubunit bridge (bridge B4) with the 23S rRNA of the 50S subunit in the ribosome. In Bordetella avium (strain 197N), this protein is Small ribosomal subunit protein uS15.